We begin with the raw amino-acid sequence, 288 residues long: Glycine--tRNA ligase alpha subunit (288 aa).

It belongs to the class-II aminoacyl-tRNA synthetase family. As to quaternary structure, tetramer of two alpha and two beta subunits.

It localises to the cytoplasm. The enzyme catalyses tRNA(Gly) + glycine + ATP = glycyl-tRNA(Gly) + AMP + diphosphate. In Desulfatibacillum aliphaticivorans, this protein is Glycine--tRNA ligase alpha subunit.